We begin with the raw amino-acid sequence, 21 residues long: Major outer membrane protein (21 aa).

As to quaternary structure, disulfide bond interactions within and between MOMP molecules and other components form high molecular-weight oligomers.

Its subcellular location is the cell outer membrane. Structural rigidity of the outer membrane of elementary bodies and porin forming, permitting diffusion of solutes through the intracellular reticulate body membrane. In Actinobacillus equuli, this protein is Major outer membrane protein.